Here is a 445-residue protein sequence, read N- to C-terminus: Phosphoglucosamine mutase (445 aa).

Serine 102 (phosphoserine intermediate) is an active-site residue. 4 residues coordinate Mg(2+): serine 102, aspartate 241, aspartate 243, and aspartate 245. Serine 102 is subject to Phosphoserine.

Belongs to the phosphohexose mutase family. It depends on Mg(2+) as a cofactor. Post-translationally, activated by phosphorylation.

The catalysed reaction is alpha-D-glucosamine 1-phosphate = D-glucosamine 6-phosphate. Catalyzes the conversion of glucosamine-6-phosphate to glucosamine-1-phosphate. In Shigella flexneri serotype 5b (strain 8401), this protein is Phosphoglucosamine mutase.